Here is a 331-residue protein sequence, read N- to C-terminus: Protein RecA (331 aa).

Position 66-73 (66-73) interacts with ATP; sequence GPESSGKT.

The protein belongs to the RecA family.

The protein localises to the cytoplasm. Can catalyze the hydrolysis of ATP in the presence of single-stranded DNA, the ATP-dependent uptake of single-stranded DNA by duplex DNA, and the ATP-dependent hybridization of homologous single-stranded DNAs. It interacts with LexA causing its activation and leading to its autocatalytic cleavage. The chain is Protein RecA from Acholeplasma laidlawii (strain PG-8A).